We begin with the raw amino-acid sequence, 317 residues long: 1D-myo-inositol 2-acetamido-2-deoxy-alpha-D-glucopyranoside deacetylase (317 aa).

The Zn(2+) site is built by His-15, Asp-18, and His-154. The disordered stretch occupies residues 289 to 317; sequence QDLDNRNPNSQPPADQAREDHLLTGLGFA.

Belongs to the MshB deacetylase family. Zn(2+) is required as a cofactor.

It carries out the reaction 1D-myo-inositol 2-acetamido-2-deoxy-alpha-D-glucopyranoside + H2O = 1D-myo-inositol 2-amino-2-deoxy-alpha-D-glucopyranoside + acetate. Catalyzes the deacetylation of 1D-myo-inositol 2-acetamido-2-deoxy-alpha-D-glucopyranoside (GlcNAc-Ins) in the mycothiol biosynthesis pathway. This is 1D-myo-inositol 2-acetamido-2-deoxy-alpha-D-glucopyranoside deacetylase from Segniliparus rotundus (strain ATCC BAA-972 / CDC 1076 / CIP 108378 / DSM 44985 / JCM 13578).